Reading from the N-terminus, the 273-residue chain is Glutamate racemase (273 aa).

Residues 17 to 18 (DS) and 49 to 50 (YG) each bind substrate. Cys-80 functions as the Proton donor/acceptor in the catalytic mechanism. A substrate-binding site is contributed by 81–82 (NT). The active-site Proton donor/acceptor is the Cys-190. Substrate is bound at residue 191–192 (TH).

The protein belongs to the aspartate/glutamate racemases family.

The catalysed reaction is L-glutamate = D-glutamate. It participates in cell wall biogenesis; peptidoglycan biosynthesis. Functionally, provides the (R)-glutamate required for cell wall biosynthesis. The polypeptide is Glutamate racemase (Corynebacterium glutamicum (strain ATCC 13032 / DSM 20300 / JCM 1318 / BCRC 11384 / CCUG 27702 / LMG 3730 / NBRC 12168 / NCIMB 10025 / NRRL B-2784 / 534)).